Consider the following 428-residue polypeptide: 26S proteasome regulatory subunit 6B homolog (428 aa).

Position 1 is an N-acetylmethionine (Met-1). Position 213–220 (213–220) interacts with ATP; sequence GPPGTGKT. Lys-280 participates in a covalent cross-link: Glycyl lysine isopeptide (Lys-Gly) (interchain with G-Cter in ubiquitin).

It belongs to the AAA ATPase family. N-acetylated by NAT3.

The protein resides in the cytoplasm. It localises to the nucleus. Functionally, the 26S proteasome is involved in the ATP-dependent degradation of ubiquitinated proteins. The regulatory (or ATPase) complex confers ATP dependency and substrate specificity to the 26S complex. This Saccharomyces cerevisiae (strain ATCC 204508 / S288c) (Baker's yeast) protein is 26S proteasome regulatory subunit 6B homolog (RPT3).